Reading from the N-terminus, the 370-residue chain is Aminomethyltransferase (370 aa).

It belongs to the GcvT family. The glycine cleavage system is composed of four proteins: P, T, L and H.

The catalysed reaction is N(6)-[(R)-S(8)-aminomethyldihydrolipoyl]-L-lysyl-[protein] + (6S)-5,6,7,8-tetrahydrofolate = N(6)-[(R)-dihydrolipoyl]-L-lysyl-[protein] + (6R)-5,10-methylene-5,6,7,8-tetrahydrofolate + NH4(+). The glycine cleavage system catalyzes the degradation of glycine. In Clostridium botulinum (strain ATCC 19397 / Type A), this protein is Aminomethyltransferase.